A 430-amino-acid polypeptide reads, in one-letter code: Glutamate-1-semialdehyde 2,1-aminomutase (430 aa).

Lysine 265 carries the N6-(pyridoxal phosphate)lysine modification.

This sequence belongs to the class-III pyridoxal-phosphate-dependent aminotransferase family. HemL subfamily. In terms of assembly, homodimer. Pyridoxal 5'-phosphate is required as a cofactor.

Its subcellular location is the cytoplasm. It carries out the reaction (S)-4-amino-5-oxopentanoate = 5-aminolevulinate. The protein operates within porphyrin-containing compound metabolism; protoporphyrin-IX biosynthesis; 5-aminolevulinate from L-glutamyl-tRNA(Glu): step 2/2. The protein is Glutamate-1-semialdehyde 2,1-aminomutase of Shewanella oneidensis (strain ATCC 700550 / JCM 31522 / CIP 106686 / LMG 19005 / NCIMB 14063 / MR-1).